The primary structure comprises 235 residues: Protein Thf1 (235 aa).

Positions 179-228 (LNLSSDKLQKDLDLYRSNVDKMGQLLAVIEDALEAERKKREKAKQEVATT) form a coiled coil.

Belongs to the THF1 family.

May be involved in photosynthetic membrane biogenesis. In Rippkaea orientalis (strain PCC 8801 / RF-1) (Cyanothece sp. (strain PCC 8801)), this protein is Protein Thf1.